We begin with the raw amino-acid sequence, 458 residues long: Exodeoxyribonuclease 7 large subunit (458 aa).

This sequence belongs to the XseA family. Heterooligomer composed of large and small subunits.

Its subcellular location is the cytoplasm. It catalyses the reaction Exonucleolytic cleavage in either 5'- to 3'- or 3'- to 5'-direction to yield nucleoside 5'-phosphates.. Functionally, bidirectionally degrades single-stranded DNA into large acid-insoluble oligonucleotides, which are then degraded further into small acid-soluble oligonucleotides. The chain is Exodeoxyribonuclease 7 large subunit from Yersinia pseudotuberculosis serotype O:1b (strain IP 31758).